A 151-amino-acid chain; its full sequence is Large ribosomal subunit protein eL8 (151 aa).

It belongs to the eukaryotic ribosomal protein eL8 family. Part of the 50S ribosomal subunit. Probably part of the RNase P complex.

It localises to the cytoplasm. In terms of biological role, multifunctional RNA-binding protein that recognizes the K-turn motif in ribosomal RNA, the RNA component of RNase P, box H/ACA, box C/D and box C'/D' sRNAs. The polypeptide is Large ribosomal subunit protein eL8 (Pyrobaculum neutrophilum (strain DSM 2338 / JCM 9278 / NBRC 100436 / V24Sta) (Thermoproteus neutrophilus)).